Reading from the N-terminus, the 347-residue chain is Protein-glutamate methylesterase/protein-glutamine glutaminase (347 aa).

Residues 6-123 (RVLVVDDSPT…HRPFGDLAEK (118 aa)) form the Response regulatory domain. D57 carries the 4-aspartylphosphate modification. Residues 150 to 342 (FRVGRKIVAI…EEILKLTAAR (193 aa)) enclose the CheB-type methylesterase domain. Active-site residues include S162, H188, and D284.

This sequence belongs to the CheB family. In terms of processing, phosphorylated by CheA. Phosphorylation of the N-terminal regulatory domain activates the methylesterase activity.

It localises to the cytoplasm. The catalysed reaction is [protein]-L-glutamate 5-O-methyl ester + H2O = L-glutamyl-[protein] + methanol + H(+). It catalyses the reaction L-glutaminyl-[protein] + H2O = L-glutamyl-[protein] + NH4(+). Involved in chemotaxis. Part of a chemotaxis signal transduction system that modulates chemotaxis in response to various stimuli. Catalyzes the demethylation of specific methylglutamate residues introduced into the chemoreceptors (methyl-accepting chemotaxis proteins or MCP) by CheR. Also mediates the irreversible deamidation of specific glutamine residues to glutamic acid. This is Protein-glutamate methylesterase/protein-glutamine glutaminase from Rhizobium etli (strain ATCC 51251 / DSM 11541 / JCM 21823 / NBRC 15573 / CFN 42).